The chain runs to 159 residues: MLLLLLGIIVLHVAVLVLLFVATIVSQWIVGNGHATDLWQNCSTTSGNVQHCLSSSANEWLQSVQATMILSIIFSVLSLFLFFCQLFTLTKGGRFYITGIFQILAGLCVMSAASIYTVRHPEWHLDSAYSYGFAYILAWVAFPLALLSGVVYVILRKRE.

Position 1 (Met1) is a topological domain, cytoplasmic. Residues 2–31 (LLLLLGIIVLHVAVLVLLFVATIVSQWIVG) traverse the membrane as a helical segment. Residues 32 to 64 (NGHATDLWQNCSTTSGNVQHCLSSSANEWLQSV) lie on the Extracellular side of the membrane. N-linked (GlcNAc...) asparagine glycosylation is present at Asn41. A helical membrane pass occupies residues 65-91 (QATMILSIIFSVLSLFLFFCQLFTLTK). Over 92-95 (GGRF) the chain is Cytoplasmic. The helical transmembrane segment at 96–119 (YITGIFQILAGLCVMSAASIYTVR) threads the bilayer. At 120–133 (HPEWHLDSAYSYGF) the chain is on the extracellular side. The chain crosses the membrane as a helical span at residues 134 to 156 (AYILAWVAFPLALLSGVVYVILR). The Cytoplasmic portion of the chain corresponds to 157-159 (KRE).

The protein belongs to the PMP-22/EMP/MP20 family. In terms of processing, ubiquitinated by the DCX(DCAF13) E3 ubiquitin ligase complex, leading to its degradation.

It is found in the cell membrane. Its function is as follows. Might be involved in growth regulation, and in myelinization in the peripheral nervous system. In Equus caballus (Horse), this protein is Peripheral myelin protein 22 (PMP22).